A 278-amino-acid polypeptide reads, in one-letter code: 4-deoxy-L-threo-5-hexosulose-uronate ketol-isomerase (278 aa).

Zn(2+)-binding residues include H196, H198, E203, and H245.

It belongs to the KduI family. The cofactor is Zn(2+).

The enzyme catalyses 5-dehydro-4-deoxy-D-glucuronate = 3-deoxy-D-glycero-2,5-hexodiulosonate. Its pathway is glycan metabolism; pectin degradation; 2-dehydro-3-deoxy-D-gluconate from pectin: step 4/5. Catalyzes the isomerization of 5-dehydro-4-deoxy-D-glucuronate to 3-deoxy-D-glycero-2,5-hexodiulosonate. The polypeptide is 4-deoxy-L-threo-5-hexosulose-uronate ketol-isomerase (Yersinia pestis bv. Antiqua (strain Antiqua)).